Consider the following 297-residue polypeptide: Inosose dehydratase (297 aa).

The protein belongs to the IolE/MocC family. The cofactor is glutathione. It depends on Co(2+) as a cofactor. Mn(2+) is required as a cofactor.

It carries out the reaction scyllo-inosose = 3D-3,5/4-trihydroxycyclohexane-1,2-dione + H2O. Its pathway is polyol metabolism; myo-inositol degradation into acetyl-CoA; acetyl-CoA from myo-inositol: step 2/7. Functionally, catalyzes the dehydration of inosose (2-keto-myo-inositol, 2KMI or 2,4,6/3,5-pentahydroxycyclohexanone) to 3D-(3,5/4)-trihydroxycyclohexane-1,2-dione (D-2,3-diketo-4-deoxy-epi-inositol). The polypeptide is Inosose dehydratase (Clostridium perfringens (strain 13 / Type A)).